The primary structure comprises 671 residues: Receptor-interacting serine/threonine-protein kinase 1 (671 aa).

A Phosphoserine; by IKKA and IKKB modification is found at S6. A Protein kinase domain is found at 17–289 (FLESAELDSG…GIEEKFRPFY (273 aa)). The residue at position 20 (S20) is a Phosphoserine; by autocatalysis. Residues 23 to 31 (LDSGGFGKV) and K45 each bind ATP. The residue at position 25 (S25) is a Phosphoserine; by IKKA and IKKB. D138 serves as the catalytic Proton acceptor. S161 carries the phosphoserine; by RIPK3 and autocatalysis modification. S166 is modified (phosphoserine; by autocatalysis). The interval 290–582 (LSQLEESVEE…QAIFDNTTSL (293 aa)) is interaction with SQSTM1. S303 is subject to Phosphoserine. A phosphoserine; by MAP3K7 mark is found at S320, S331, and S333. The segment covering 331-348 (SRSNSATEQPGSLHSSQG) has biased composition (polar residues). Positions 331-354 (SRSNSATEQPGSLHSSQGLGMGPV) are disordered. K377 participates in a covalent cross-link: Glycyl lysine isopeptide (Lys-Gly) (interchain with G-Cter in ubiquitin). Residue Y384 is modified to Phosphotyrosine. The tract at residues 389-455 (SRMDRQTKQQ…GNAVHQPSGL (67 aa)) is disordered. Over residues 428–444 (NFQNTEGKGTAYSSAAS) the composition is skewed to polar residues. The RIP homotypic interaction motif (RHIM) motif lies at 531 to 547 (YTIYNSTGIQIGAYNYM). Residues 583–669 (TDKHLDPIRE…DLLSSLIYVS (87 aa)) enclose the Death domain. The (Microbial infection) N-beta-linked (GlcNAc) arginine glycan is linked to R603.

This sequence belongs to the protein kinase superfamily. TKL Ser/Thr protein kinase family. In terms of assembly, homodimer. Interacts (via RIP homotypic interaction motif) with RIPK3 (via RIP homotypic interaction motif); this interaction induces RIPK1 phosphorylation and formation of a RIPK1-RIPK3 necroptosis-inducing complex. Upon TNF-induced necrosis, the RIPK1-RIPK3 dimer further interacts with PGAM5 and MLKL; the formation of this complex leads to PGAM5 phosphorylation and increase in PGAM5 phosphatase activity. Interacts (via the death domain) with TNFRSF6 (via the death domain) and TRADD (via the death domain). Is recruited by TRADD to TNFRSF1A in a TNF-dependent process. Binds RNF216, EGFR, IKBKG, TRAF1, TRAF2 and TRAF3. Interacts with BNLF1. Interacts with SQSTM1 upon TNF-alpha stimulation. May interact with MAVS/IPS1. Interacts with ZFAND5. Interacts with RBCK1. Interacts with ZBP1. Interacts with BIRC2/c-IAP1, BIRC3/c-IAP2 and XIAP/BIRC4. Interacts (via kinase domain) with DAB2IP (via Ras-GAP domain); the interaction occurs in a TNF-alpha-dependent manner. Interacts with ARHGEF2. Interacts (via protein kinase domain) with RFFL; involved in RIPK1 ubiquitination. Interacts with RNF34; involved in RIPK1 ubiquitination. Interacts with TICAM1 and this interaction is enhanced in the presence of WDFY1. Interacts with PELI1. Interacts (via death domain) with CRADD (via death domain); the interaction is direct. Component of complex IIa composed of at least RIPK1, FADD and CASP8. Component of the AIM2 PANoptosome complex, a multiprotein complex that drives inflammatory cell death (PANoptosis). Interacts with MAP3K7, CFLAR, CASP8, FADD and NEMO. Interacts with TAX1BP1; this interaction negatively regulates RIPK1 ubiquitination. Interacts with GRB2. Interacts with DDX24; this interaction disrupts RLR signaling activation of IFN-dependent transcription factor IRF7. (Microbial infection) Interacts with mumps virus protein SH; this interaction inhibits downstream NF-kappa-B pathway activation. As to quaternary structure, (Microbial infection) Interacts with Murid herpesvirus 1 protein RIR1. In terms of assembly, (Microbial infection) Interacts (via RIP homotypic interaction motif) with herpes simplex virus 1/HHV-1 protein RIR1/ICP6 (via RIP homotypic interaction motif); this interaction prevents necroptosis activation. (Microbial infection) Interacts (via RIP homotypic interaction motif) with herpes simplex virus 2/HHV-2 protein RIR1/ICP10 (via RIP homotypic interaction motif); this interaction prevents necroptosis activation. In terms of processing, (Microbial infection) Proteolytically cleaved by S.flexneri OspD3 within the RIP homotypic interaction motif (RHIM), leading to its degradation and inhibition of necroptosis. Proteolytically cleaved by CASP8 at Asp-324. Cleavage is crucial for limiting TNF-induced apoptosis, necroptosis and inflammatory response. Cleavage abolishes NF-kappa-B activation and enhances the interaction of TRADD with FADD. Proteolytically cleaved by CASP6 during intrinsic apoptosis. Post-translationally, RIPK1 and RIPK3 undergo reciprocal auto- and trans-phosphorylation. Phosphorylation of Ser-161 by RIPK3 is necessary for the formation of the necroptosis-inducing complex. Phosphorylation at Ser-25 represses its kinase activity and consequently prevents TNF-mediated RIPK1-dependent cell death. Phosphorylated at Ser-320 by MAP3K7 which requires prior ubiquitination with 'Lys-63'-linked chains by BIRC2/c-IAP1 and BIRC3/c-IAP2. This phosphorylation positively regulates RIPK1 interaction with RIPK3 to promote necroptosis but negatively regulates RIPK1 kinase activity and its interaction with FADD to mediate apoptosis. In terms of processing, deubiquitinated by USP7; this modification is required for TNF-alpha-induced apoptosis. Ubiquitinated with 'Lys-11'-, 'Lys-48'-, 'Lys-63'- and linear-linked type ubiquitin. Polyubiquitination with 'Lys-63'-linked chains by TRAF2 induces association with the IKK complex. Deubiquitination of 'Lys-63'-linked chains and polyubiquitination with 'Lys-48'-linked chains by TNFAIP3 leads to RIPK1 proteasomal degradation and consequently down-regulates TNF-alpha-induced NF-kappa-B signaling. 'Lys-48'-linked polyubiquitination by RFFL or RNF34 also promotes proteasomal degradation and negatively regulates TNF-alpha-induced NF-kappa-B signaling. Linear polyubiquitinated; the head-to-tail linear polyubiquitination ('Met-1'-linked) is mediated by the LUBAC complex and decreases protein kinase activity. Deubiquitination of linear polyubiquitin by CYLD promotes the kinase activity. Polyubiquitinated with 'Lys-48' and 'Lys-63'-linked chains by BIRC2/c-IAP1 and BIRC3/c-IAP2, leading to activation of NF-kappa-B. Ubiquitinated with 'Lys-63'-linked chains by PELI1. Ubiquitination at Lys-377 with 'Lys-63'-linked chains by BIRC2/c-IAP1 and BIRC3/c-IAP2 is essential for its phosphorylation at Ser-320 mediated by MAP3K7. This ubiquitination is required for NF-kB activation, suppresses RIPK1 kinase activity and plays a critical role in preventing cell death during embryonic development. Post-translationally, (Microbial infection) Glycosylated at Arg-603 by enteropathogenic E.coli protein NleB1: arginine GlcNAcylation prevents homotypic/heterotypic death domain interactions.

It localises to the cytoplasm. Its subcellular location is the cell membrane. It carries out the reaction L-seryl-[protein] + ATP = O-phospho-L-seryl-[protein] + ADP + H(+). It catalyses the reaction L-threonyl-[protein] + ATP = O-phospho-L-threonyl-[protein] + ADP + H(+). Its activity is regulated as follows. Serine-threonine kinase activity is inhibited by linear polyubiquitination ('Met-1'-linked) by the LUBAC complex. Inhibited by necrostatins, including necrostatin-1, necrostatin-3 and necrostatin-4. Functionally, serine-threonine kinase which is a key regulator of TNF-mediated apoptosis, necroptosis and inflammatory pathways. Exhibits kinase activity-dependent functions that regulate cell death and kinase-independent scaffold functions regulating inflammatory signaling and cell survival. Has kinase-independent scaffold functions: upon binding of TNF to TNFR1, RIPK1 is recruited to the TNF-R1 signaling complex (TNF-RSC also known as complex I) where it acts as a scaffold protein promoting cell survival, in part, by activating the canonical NF-kappa-B pathway. Kinase activity is essential to regulate necroptosis and apoptosis, two parallel forms of cell death: upon activation of its protein kinase activity, regulates assembly of two death-inducing complexes, namely complex IIa (RIPK1-FADD-CASP8), which drives apoptosis, and the complex IIb (RIPK1-RIPK3-MLKL), which drives necroptosis. RIPK1 is required to limit CASP8-dependent TNFR1-induced apoptosis. In normal conditions, RIPK1 acts as an inhibitor of RIPK3-dependent necroptosis, a process mediated by RIPK3 component of complex IIb, which catalyzes phosphorylation of MLKL upon induction by ZBP1. Inhibits RIPK3-mediated necroptosis via FADD-mediated recruitment of CASP8, which cleaves RIPK1 and limits TNF-induced necroptosis. Required to inhibit apoptosis and necroptosis during embryonic development: acts by preventing the interaction of TRADD with FADD thereby limiting aberrant activation of CASP8. In addition to apoptosis and necroptosis, also involved in inflammatory response by promoting transcriptional production of pro-inflammatory cytokines, such as interleukin-6 (IL6). Phosphorylates RIPK3: RIPK1 and RIPK3 undergo reciprocal auto- and trans-phosphorylation. Phosphorylates DAB2IP at 'Ser-728' in a TNF-alpha-dependent manner, and thereby activates the MAP3K5-JNK apoptotic cascade. Required for ZBP1-induced NF-kappa-B activation in response to DNA damage. This chain is Receptor-interacting serine/threonine-protein kinase 1, found in Homo sapiens (Human).